The primary structure comprises 486 residues: Aspartyl/glutamyl-tRNA(Asn/Gln) amidotransferase subunit B (486 aa).

It belongs to the GatB/GatE family. GatB subfamily. In terms of assembly, heterotrimer of A, B and C subunits.

The catalysed reaction is L-glutamyl-tRNA(Gln) + L-glutamine + ATP + H2O = L-glutaminyl-tRNA(Gln) + L-glutamate + ADP + phosphate + H(+). It catalyses the reaction L-aspartyl-tRNA(Asn) + L-glutamine + ATP + H2O = L-asparaginyl-tRNA(Asn) + L-glutamate + ADP + phosphate + 2 H(+). In terms of biological role, allows the formation of correctly charged Asn-tRNA(Asn) or Gln-tRNA(Gln) through the transamidation of misacylated Asp-tRNA(Asn) or Glu-tRNA(Gln) in organisms which lack either or both of asparaginyl-tRNA or glutaminyl-tRNA synthetases. The reaction takes place in the presence of glutamine and ATP through an activated phospho-Asp-tRNA(Asn) or phospho-Glu-tRNA(Gln). The polypeptide is Aspartyl/glutamyl-tRNA(Asn/Gln) amidotransferase subunit B (Leptospira borgpetersenii serovar Hardjo-bovis (strain JB197)).